A 425-amino-acid polypeptide reads, in one-letter code: Glutamyl-tRNA reductase (425 aa).

Substrate-binding positions include 49–52 (TCNR), serine 107, 112–114 (EPQ), and glutamine 118. Cysteine 50 serves as the catalytic Nucleophile. 187 to 192 (GAGETI) contacts NADP(+).

Belongs to the glutamyl-tRNA reductase family. Homodimer.

The enzyme catalyses (S)-4-amino-5-oxopentanoate + tRNA(Glu) + NADP(+) = L-glutamyl-tRNA(Glu) + NADPH + H(+). It participates in porphyrin-containing compound metabolism; protoporphyrin-IX biosynthesis; 5-aminolevulinate from L-glutamyl-tRNA(Glu): step 1/2. Catalyzes the NADPH-dependent reduction of glutamyl-tRNA(Glu) to glutamate 1-semialdehyde (GSA). This is Glutamyl-tRNA reductase from Pseudomonas putida (strain W619).